Consider the following 173-residue polypeptide: Photosystem I assembly protein Ycf3 (173 aa).

TPR repeat units lie at residues 35–68 (AYVY…EESP), 72–105 (SETL…NSNQ), and 120–153 (GRTA…YPGG).

It belongs to the Ycf3 family.

Its subcellular location is the cellular thylakoid membrane. Functionally, essential for the assembly of the photosystem I (PSI) complex. May act as a chaperone-like factor to guide the assembly of the PSI subunits. The protein is Photosystem I assembly protein Ycf3 of Prochlorococcus marinus (strain MIT 9303).